A 166-amino-acid chain; its full sequence is Protein-export protein SecB (166 aa).

Belongs to the SecB family. Homotetramer, a dimer of dimers. One homotetramer interacts with 1 SecA dimer.

It localises to the cytoplasm. In terms of biological role, one of the proteins required for the normal export of preproteins out of the cell cytoplasm. It is a molecular chaperone that binds to a subset of precursor proteins, maintaining them in a translocation-competent state. It also specifically binds to its receptor SecA. This Rhizorhabdus wittichii (strain DSM 6014 / CCUG 31198 / JCM 15750 / NBRC 105917 / EY 4224 / RW1) (Sphingomonas wittichii) protein is Protein-export protein SecB.